A 215-amino-acid chain; its full sequence is Pyrrolidone-carboxylate peptidase (215 aa).

Catalysis depends on residues Glu81, Cys144, and His168.

It belongs to the peptidase C15 family. In terms of assembly, homotetramer.

The protein localises to the cytoplasm. The catalysed reaction is Release of an N-terminal pyroglutamyl group from a polypeptide, the second amino acid generally not being Pro.. In terms of biological role, removes 5-oxoproline from various penultimate amino acid residues except L-proline. In Bacillus licheniformis (strain ATCC 14580 / DSM 13 / JCM 2505 / CCUG 7422 / NBRC 12200 / NCIMB 9375 / NCTC 10341 / NRRL NRS-1264 / Gibson 46), this protein is Pyrrolidone-carboxylate peptidase.